The primary structure comprises 739 residues: Tegument protein UL47 (739 aa).

Positions 1 to 13 (MDAARDGRPERRR) are enriched in basic and acidic residues. Disordered stretches follow at residues 1 to 123 (MDAA…QDYL) and 154 to 198 (QFPP…DDAA). The Nuclear localization signal motif lies at 10–30 (ERRRAVSGTYRTHPFQRPSAR). The segment covering 28–53 (SARRSAGRPARCGRRGRGAPRVRRPR) has biased composition (basic residues). Residues 62–87 (EDTSEDENVYDYIDGDSSDSADDYDS) show a composition bias toward acidic residues. The short motif at 94–121 (RGPNHGAGDAMDTDAPPERAPEGGAPQD) is the Nuclear export signal element. A Nuclear export signal motif is present at residues 483–493 (LSAYLTLFVAL).

Belongs to the alphaherpesvirinae HHV-1 UL47 family. In terms of assembly, interacts with US3 kinase. Interacts with UL31 and UL34; these interactions seem important for efficient virion nuclear egress. Interacts with UL41/VHS. Interacts with host DDB1. In terms of processing, monoubiquitinated. Post-translationally, phosphorylated by US3. This phosphorylation is required for proper nuclear localization.

The protein resides in the virion tegument. Its subcellular location is the host nucleus. The protein localises to the host cytoplasm. Functionally, tegument protein that can bind to various RNA transcripts. Plays a role in the attenuation of selective viral and cellular mRNA degradation by modulating the activity of host shutoff RNase UL41/VHS. Also plays a role in the primary envelopment of virions in the perinuclear space, probably by interacting with two nuclear egress proteins UL31 and UL34. This Bovine herpesvirus 1.1 (strain Cooper) (BoHV-1) protein is Tegument protein UL47.